A 429-amino-acid polypeptide reads, in one-letter code: 3-phosphoshikimate 1-carboxyvinyltransferase (429 aa).

Residues K20, S21, and R25 each coordinate 3-phosphoshikimate. K20 provides a ligand contact to phosphoenolpyruvate. Residues G89 and R118 each coordinate phosphoenolpyruvate. Positions 164, 165, 166, 192, 311, and 338 each coordinate 3-phosphoshikimate. Q166 lines the phosphoenolpyruvate pocket. D311 (proton acceptor) is an active-site residue. Residues R342 and R384 each coordinate phosphoenolpyruvate.

Belongs to the EPSP synthase family. Monomer.

It localises to the cytoplasm. It carries out the reaction 3-phosphoshikimate + phosphoenolpyruvate = 5-O-(1-carboxyvinyl)-3-phosphoshikimate + phosphate. Its pathway is metabolic intermediate biosynthesis; chorismate biosynthesis. Catalyzes the transfer of the enolpyruvyl moiety of phosphoenolpyruvate (PEP) to the 5-hydroxyl of shikimate-3-phosphate (S3P) to produce enolpyruvyl shikimate-3-phosphate and inorganic phosphate. The chain is 3-phosphoshikimate 1-carboxyvinyltransferase from Methanococcus maripaludis (strain DSM 14266 / JCM 13030 / NBRC 101832 / S2 / LL).